Here is a 343-residue protein sequence, read N- to C-terminus: Ubiquitin thioesterase OTU1 (343 aa).

Residues 45 to 123 (RCKAKGGTHL…IVEEDQTRPK (79 aa)) are UBX-like. Residues 144–269 (LTRTAVPADN…GIHYDPLQRN (126 aa)) form the OTU domain. Residues 149–155 (VPADNSC) form a cys-loop region. Aspartate 152 is a catalytic residue. Cysteine 155 functions as the Nucleophile in the catalytic mechanism. Positions 208–218 (IRRDDTWGGAI) are variable-loop. Residues 258 to 262 (YDGIH) are his-loop. Isoleucine 261 provides a ligand contact to substrate. Histidine 262 is an active-site residue. Residues 286 to 291 (DIVLVQ) are S2 site. The C2H2-type zinc-finger motif lies at 313–337 (LRCMICQKGLTGQAEARDHARETGH). Histidine 337 is a catalytic residue.

Interacts with VCP; the interaction is direct. Interacts with FAF2/UBXD8. Interacts with DERL1; however interaction is dependent on the UBAX-like region, suggesting that it may be indirect. Interacts with PLAA, UBXN6 and VCP; may form a complex involved in macroautophagy.

Its subcellular location is the cytoplasm. It carries out the reaction Thiol-dependent hydrolysis of ester, thioester, amide, peptide and isopeptide bonds formed by the C-terminal Gly of ubiquitin (a 76-residue protein attached to proteins as an intracellular targeting signal).. Its function is as follows. Hydrolase that can remove conjugated ubiquitin from proteins and participates in endoplasmic reticulum-associated degradation (ERAD) for misfolded lumenal proteins. May act by triming the ubiquitin chain on the associated substrate to facilitate their threading through the VCP/p97 pore. Ubiquitin moieties on substrates may present a steric impediment to the threading process when the substrate is transferred to the VCP pore and threaded through VCP's axial channel. Mediates deubiquitination of 'Lys-27'-, 'Lys-29'- and 'Lys-33'-linked polyubiquitin chains. Also able to hydrolyze 'Lys-11'-linked ubiquitin chains. Cleaves both polyubiquitin and di-ubiquitin. May play a role in macroautophagy, regulating for instance the clearance of damaged lysosomes. May recruit PLAA, UBXN6 and VCP to damaged lysosome membranes decorated with K48-linked ubiquitin chains and remove these chains allowing autophagosome formation. The polypeptide is Ubiquitin thioesterase OTU1 (Yod1) (Mus musculus (Mouse)).